A 2293-amino-acid polypeptide reads, in one-letter code: Protein Ycf2 A (2293 aa).

1647 to 1654 (GSIGTGRS) is an ATP binding site.

The protein belongs to the Ycf2 family.

The protein resides in the plastid. The protein localises to the chloroplast stroma. Its function is as follows. Probable ATPase of unknown function. Its presence in a non-photosynthetic plant (Epifagus virginiana) and experiments in tobacco indicate that it has an essential function which is probably not related to photosynthesis. In Crucihimalaya wallichii (Rock-cress), this protein is Protein Ycf2 A.